Here is a 153-residue protein sequence, read N- to C-terminus: Natriuretic peptides A (153 aa).

The signal sequence occupies residues 1 to 25; it reads MGSFSTIMASFLLFLAFQLQGQTRA. 2 propeptides span residues 26-123 and 93-103; these read NPVY…AAPR and DGGALGRGSWD. Residues 54 to 105 are disordered; the sequence is EDEVMPPQVLSDQSEEERAALSPLPEVPPWTGEVNPAQRDGGALGRGSWDSS. Ser-129 is modified (phosphoserine). A disulfide bridge connects residues Cys-130 and Cys-146. The segment at 147–151 is important for degradation of atrial natriuretic peptide by IDE; that stretch reads NSFRY.

The protein belongs to the natriuretic peptide family. Homodimer; disulfide-linked antiparallel dimer. The precursor molecule is proteolytically cleaved by CORIN at Arg-123 to produce the atrial natriuretic peptide. Undergoes further proteolytic cleavage by unknown proteases to give rise to long-acting natriuretic peptide, vessel dilator and kaliuretic peptide. Additional processing gives rise to the auriculin and atriopeptin peptides. In the kidneys, alternative processing by an unknown protease results in the peptide urodilatin. Post-translationally, cleavage by MME initiates degradation of the factor and thereby regulates its activity. Degradation by IDE results in reduced activation of NPR1 (in vitro). During IDE degradation, the resulting products can temporarily stimulate NPR2 to produce cGMP, before the fragments are completely degraded and inactivated by IDE (in vitro). In terms of processing, degraded by IDE. Phosphorylation on Ser-129 decreases vasorelaxant activity.

The protein resides in the secreted. It localises to the perikaryon. The protein localises to the cell projection. Its function is as follows. Hormone that plays a key role in mediating cardio-renal homeostasis, and is involved in vascular remodeling and regulating energy metabolism. Acts by specifically binding and stimulating NPR1 to produce cGMP, which in turn activates effector proteins, such as PRKG1, that drive various biological responses. Regulates vasodilation, natriuresis, diuresis and aldosterone synthesis and is therefore essential for regulating blood pressure, controlling the extracellular fluid volume and maintaining the fluid-electrolyte balance. Also involved in inhibiting cardiac remodeling and cardiac hypertrophy by inducing cardiomyocyte apoptosis and attenuating the growth of cardiomyocytes and fibroblasts. Plays a role in female pregnancy by promoting trophoblast invasion and spiral artery remodeling in uterus, and thus prevents pregnancy-induced hypertension. In adipose tissue, acts in various cGMP- and PKG-dependent pathways to regulate lipid metabolism and energy homeostasis. This includes up-regulating lipid metabolism and mitochondrial oxygen utilization by activating the AMP-activated protein kinase (AMPK), and increasing energy expenditure by acting via MAPK11 to promote the UCP1-dependent thermogenesis of brown adipose tissue. Binds the clearance receptor NPR3 which removes the hormone from circulation. Functionally, may have a role in cardio-renal homeostasis through regulation of natriuresis, diuresis, vasodilation, and inhibiting aldosterone synthesis. In vitro, promotes the production of cGMP and induces vasodilation. May promote natriuresis, at least in part, by enhancing prostaglandin E2 synthesis resulting in the inhibition of renal Na+-K+-ATPase. However reports on the involvement of this peptide in mammal blood volume and blood pressure homeostasis are conflicting; according to a report, in vivo it is not sufficient to activate cGMP and does not inhibit collecting duct transport nor effect diuresis and natriuresis. Appears to bind to specific receptors that are distinct from the receptors bound by atrial natriuretic peptide and vessel dilator. Possibly enhances protein excretion in urine by decreasing proximal tubular protein reabsorption. In terms of biological role, may have a role in cardio-renal homeostasis through regulation of natriuresis, diuresis, and vasodilation. In vitro, promotes the production of cGMP and induces vasodilation. May promote natriuresis, at least in part, by enhancing prostaglandin E2 synthesis resulting in the inhibition of renal Na+-K+-ATPase. However reports on the involvement of this peptide in mammal blood volume and blood pressure homeostasis are conflicting; according to a report it is not sufficient to activate cGMP and does not inhibit collecting duct transport nor effect diuresis and natriuresis. Appears to bind to specific receptors that are distinct from the receptors bound by the atrial natriuretic and long-acting natriuretic peptides. Possibly functions in protein excretion in urine by maintaining the integrity of the proximal tubules and enhancing protein excretion by decreasing proximal tubular protein reabsorption. May have a role in cardio-renal homeostasis through regulation of diuresis and inhibiting aldosterone synthesis. In vitro, promotes the production of cGMP and induces vasodilation. May promote natriuresis, at least in part, by enhancing prostaglandin E2 synthesis resulting in the inhibition of renal Na+-K+-ATPase. May have a role in potassium excretion but not sodium excretion (natriuresis). Possibly enhances protein excretion in urine by decreasing proximal tubular protein reabsorption. Its function is as follows. Hormone produced in the kidneys that appears to be important for maintaining cardio-renal homeostasis. Mediates vasodilation, natriuresis and diuresis primarily in the renal system, in order to maintain the extracellular fluid volume and control the fluid-electrolyte balance. Specifically binds and stimulates cGMP production by renal transmembrane receptors, likely NPR1. Urodilatin not ANP, may be the natriuretic peptide responsible for the regulation of sodium and water homeostasis in the kidney. Functionally, may have a role in cardio-renal homeostasis through regulation of natriuresis and vasodilation. In vivo promotes natriuresis and in vitro, vasodilates renal artery strips. In terms of biological role, may have a role in cardio-renal homeostasis through regulation of regulation of natriuresis and vasodilation. In vivo promotes natriuresis. In vitro, vasodilates intestinal smooth muscle but not smooth muscle strips. May have a role in cardio-renal homeostasis through regulation of natriuresis and vasodilation. In vivo promotes natriuresis. In vitro, selectively vasodilates intestinal and vascular smooth muscle strips. Its function is as follows. May have a role in cardio-renal homeostasis through regulation of natriuresis and vasodilation. In vivo promotes natriuresis. In vitro, selectively vasodilates intestinal smooth muscle but not vascular smooth muscle strips. This Equus caballus (Horse) protein is Natriuretic peptides A (NPPA).